The primary structure comprises 371 residues: MRAEIEALAQDIRRSAALLKRHLNWDEALMRLDELNASAENPDLWNDAGAAQKIMRERNELDSAIQGCRALERELADLAELIELGEMEGDQTVIDDAEEQVRALKERAAKMELETLLSGEADHNDCYMEINAGAGGTESQDWAEMLLRMYTRWAEKHGYKVEWLEESAGEQAGIKSATIRILGHNAYGWLKTESGVHRLVRISPYDSAARRHTSFSSAWVYPVIDDTIDIQINESECRIDTYRASGAGGQHINKTDSAVRITHIPTGIAVACQMERSQHQNRARAWDMLRARLYEAELQKREAAAQALEDQKTDIGWGHQIRSYVLQPYQMVKDLRTNVETSDTQGVLDGDLDMFMAASLAARVQGQVDQG.

Position 250 is an N5-methylglutamine (Q250).

The protein belongs to the prokaryotic/mitochondrial release factor family. Methylated by PrmC. Methylation increases the termination efficiency of RF2.

It localises to the cytoplasm. In terms of biological role, peptide chain release factor 2 directs the termination of translation in response to the peptide chain termination codons UGA and UAA. This Paramagnetospirillum magneticum (strain ATCC 700264 / AMB-1) (Magnetospirillum magneticum) protein is Peptide chain release factor 2.